A 354-amino-acid polypeptide reads, in one-letter code: Adenine deaminase (354 aa).

Zn(2+)-binding residues include histidine 20, histidine 22, and histidine 200. Glutamate 203 functions as the Proton donor in the catalytic mechanism. A Zn(2+)-binding site is contributed by aspartate 281. Aspartate 282 contacts substrate.

The protein belongs to the metallo-dependent hydrolases superfamily. Adenosine and AMP deaminases family. Adenine deaminase type 2 subfamily. Requires Zn(2+) as cofactor.

The catalysed reaction is adenine + H2O + H(+) = hypoxanthine + NH4(+). Functionally, catalyzes the hydrolytic deamination of adenine to hypoxanthine. Plays an important role in the purine salvage pathway and in nitrogen catabolism. The protein is Adenine deaminase of Cupriavidus metallidurans (strain ATCC 43123 / DSM 2839 / NBRC 102507 / CH34) (Ralstonia metallidurans).